We begin with the raw amino-acid sequence, 165 residues long: Protein SprT (165 aa).

The SprT-like domain occupies 10–157; that stretch reads EACYRQAEDF…YCRRCKATLV (148 aa). Zn(2+) is bound at residue histidine 69. The active site involves glutamate 70. Histidine 73 contributes to the Zn(2+) binding site.

This sequence belongs to the SprT family. The cofactor is Zn(2+).

The protein localises to the cytoplasm. This chain is Protein SprT, found in Pseudomonas paraeruginosa (strain DSM 24068 / PA7) (Pseudomonas aeruginosa (strain PA7)).